Consider the following 212-residue polypeptide: Large ribosomal subunit protein bL25 (212 aa).

Belongs to the bacterial ribosomal protein bL25 family. CTC subfamily. In terms of assembly, part of the 50S ribosomal subunit; part of the 5S rRNA/L5/L18/L25 subcomplex. Contacts the 5S rRNA. Binds to the 5S rRNA independently of L5 and L18.

Functionally, this is one of the proteins that binds to the 5S RNA in the ribosome where it forms part of the central protuberance. The sequence is that of Large ribosomal subunit protein bL25 from Leptospira interrogans serogroup Icterohaemorrhagiae serovar copenhageni (strain Fiocruz L1-130).